The sequence spans 623 residues: DNA mismatch repair protein MutL (623 aa).

The span at 353-368 (AQQSAPRPANSYSPAS) shows a compositional bias: polar residues. The disordered stretch occupies residues 353-389 (AQQSAPRPANSYSPASWRTAPPAPRSEWSPQTAQTAH).

The protein belongs to the DNA mismatch repair MutL/HexB family.

In terms of biological role, this protein is involved in the repair of mismatches in DNA. It is required for dam-dependent methyl-directed DNA mismatch repair. May act as a 'molecular matchmaker', a protein that promotes the formation of a stable complex between two or more DNA-binding proteins in an ATP-dependent manner without itself being part of a final effector complex. This is DNA mismatch repair protein MutL from Brucella melitensis biotype 2 (strain ATCC 23457).